A 456-amino-acid polypeptide reads, in one-letter code: uncharacterized protein (456 aa).

11 helical membrane-spanning segments follow: residues 12–32, 63–83, 86–106, 143–163, 179–199, 208–228, 237–257, 305–325, 348–368, 390–410, and 414–434; these read SFIW…YLTL, FAAL…VGVA, VQAG…LGMA, WLAK…IGTF, IPVL…ILGG, SVIV…IILL, ILLI…AVGL, FLDT…TGAW, IGAT…ILGW, LAYI…IWII, and VNGL…KVII.

Belongs to the alanine or glycine:cation symporter (AGCS) (TC 2.A.25) family.

The protein localises to the cell inner membrane. This is an uncharacterized protein from Haemophilus influenzae (strain ATCC 51907 / DSM 11121 / KW20 / Rd).